A 133-amino-acid polypeptide reads, in one-letter code: Small ribosomal subunit protein uS8 (133 aa).

This sequence belongs to the universal ribosomal protein uS8 family. As to quaternary structure, part of the 30S ribosomal subunit.

In terms of biological role, one of the primary rRNA binding proteins, it binds directly to 16S rRNA central domain where it helps coordinate assembly of the platform of the 30S subunit. The polypeptide is Small ribosomal subunit protein uS8 (Hyperthermus butylicus (strain DSM 5456 / JCM 9403 / PLM1-5)).